Reading from the N-terminus, the 264-residue chain is 3-methyl-2-oxobutanoate hydroxymethyltransferase (264 aa).

2 residues coordinate Mg(2+): aspartate 43 and aspartate 82. Residues 43 to 44 (DS), aspartate 82, and lysine 111 each bind 3-methyl-2-oxobutanoate. Position 113 (glutamate 113) interacts with Mg(2+). The active-site Proton acceptor is the glutamate 180.

This sequence belongs to the PanB family. As to quaternary structure, homodecamer; pentamer of dimers. Mg(2+) is required as a cofactor.

Its subcellular location is the cytoplasm. It carries out the reaction 3-methyl-2-oxobutanoate + (6R)-5,10-methylene-5,6,7,8-tetrahydrofolate + H2O = 2-dehydropantoate + (6S)-5,6,7,8-tetrahydrofolate. Its pathway is cofactor biosynthesis; (R)-pantothenate biosynthesis; (R)-pantoate from 3-methyl-2-oxobutanoate: step 1/2. In terms of biological role, catalyzes the reversible reaction in which hydroxymethyl group from 5,10-methylenetetrahydrofolate is transferred onto alpha-ketoisovalerate to form ketopantoate. In Campylobacter fetus subsp. fetus (strain 82-40), this protein is 3-methyl-2-oxobutanoate hydroxymethyltransferase.